The primary structure comprises 327 residues: RNA ligase 1 (327 aa).

Requires Mg(2+) as cofactor. It depends on Mn(2+) as a cofactor. In terms of processing, AMPylates itself (auto-AMPylation).

The enzyme catalyses ATP + (ribonucleotide)n-3'-hydroxyl + 5'-phospho-(ribonucleotide)m = (ribonucleotide)n+m + AMP + diphosphate.. Functionally, functions as an RNA ligase, in vitro. The ligation reaction entails three nucleotidyl transfer steps. In the first step, the RNA ligase reacts with ATP in the absence of nucleic acid to form a covalent ligase-AMP intermediate and release pyrophosphate. In step 2, the ligase-AMP binds to the nucleic acid and transfers the adenylate to the 5'-PO4 terminus to form an adenylylated intermediate. In step 3, the RNA ligase directs the attack of the 3'-OH on the 5'-phosphoanhydride linkage, resulting in a repaired 3'-5' phosphodiester and release of AMP. Exhibits selectivity for single-stranded RNA substrates and may not have nick-sealing activity on double-stranded DNA-RNA hybrids. May play a role in maintaining RNA integrity under stress conditions, for example in response to reactive oxygen species (ROS). The chain is RNA ligase 1 from Mus musculus (Mouse).